The sequence spans 525 residues: Cytochrome P450 monooxygenase ltmJ (525 aa).

Residues 21 to 43 (LTWWQTIVSFIIFCIMCSWLPGN) form a helical membrane-spanning segment. Residue Asn136 is glycosylated (N-linked (GlcNAc...) asparagine). Cys465 serves as a coordination point for heme.

The protein belongs to the cytochrome P450 family. Requires heme as cofactor.

The protein resides in the membrane. The protein operates within secondary metabolite biosynthesis. In terms of biological role, cytochrome P450 monooxygenase; part of the gene clusters that mediates the biosynthesis of lolitrems, indole-diterpene mycotoxins that are potent tremorgens in mammals, and are synthesized by clavicipitaceous fungal endophytes in association with their grass hosts. The geranylgeranyl diphosphate (GGPP) synthase ltmG is proposed to catalyze the first step in lolitrem biosynthesis. LtmG catalyzes a series of iterative condensations of isopentenyl diphosphate (IPP) with dimethylallyl diphosphate (DMAPP), geranyl diphosphate (GPP), and farnesyl diphosphate (FPP), to form GGPP. GGPP then condenses with indole-3-glycerol phosphate to form 3-geranylgeranylindole, an acyclic intermediate, to be incorporated into paxilline. Either ltmG or ltmC could be responsible for this step, as both are putative prenyl transferases. The FAD-dependent monooxygenase ltmM then catalyzes the epoxidation of the two terminal alkenes of the geranylgeranyl moiety, which is subsequently cyclized by ltmB, to paspaline. The cytochrome P450 monooxygenases ltmQ and ltmP can sequentially oxidize paspaline to terpendole E and terpendole F. Alternatively, ltmP converts paspaline to an intermediate which is oxidized by ltmQ to terpendole F. LtmF, ltmK, ltmE and ltmJ appear to be unique to the epichloe endophytes. The prenyltransferase ltmF is involved in the 27-hydroxyl-O-prenylation. The cytochrome P450 monooxygenase ltmK is required for the oxidative acetal ring formation. The multi-functional prenyltransferase ltmE is required for C20- and C21-prenylations of the indole ring of paspalanes and acts together with the cytochrome P450 monooxygenase ltmJ to yield lolitremanes by multiple oxidations and ring closures. The stereoisomer pairs of lolitriol and lolitrem N or lolitrem B and lolitrem F may be attributed to variations in the way in which ring closure can occur under the action of ltmJ. While the major product of this pathway is lolitrem B, the prenyl transferases and cytochrome P450 monooxygenases identified in this pathway have a remarkable versatility in their regio- and stereo-specificities to generate a diverse range of metabolites that are products of a metabolic grid rather than a linear pathway. This chain is Cytochrome P450 monooxygenase ltmJ (ltmJ), found in Epichloe festucae var. lolii (Neotyphodium lolii).